A 244-amino-acid chain; its full sequence is 7-cyano-7-deazaguanine synthase (244 aa).

An ATP-binding site is contributed by 14–24 (FSGGQDSATCL). Zn(2+) contacts are provided by Cys202, Cys217, Cys220, and Cys223.

This sequence belongs to the QueC family. Zn(2+) is required as a cofactor.

The enzyme catalyses 7-carboxy-7-deazaguanine + NH4(+) + ATP = 7-cyano-7-deazaguanine + ADP + phosphate + H2O + H(+). The protein operates within purine metabolism; 7-cyano-7-deazaguanine biosynthesis. Functionally, catalyzes the ATP-dependent conversion of 7-carboxy-7-deazaguanine (CDG) to 7-cyano-7-deazaguanine (preQ(0)). This is 7-cyano-7-deazaguanine synthase from Paraburkholderia phytofirmans (strain DSM 17436 / LMG 22146 / PsJN) (Burkholderia phytofirmans).